Reading from the N-terminus, the 82-residue chain is Small ribosomal subunit protein bS16 (82 aa).

This sequence belongs to the bacterial ribosomal protein bS16 family.

The chain is Small ribosomal subunit protein bS16 from Vibrio parahaemolyticus serotype O3:K6 (strain RIMD 2210633).